The chain runs to 226 residues: Probable GPI-anchored adhesin-like protein PGA28 (226 aa).

Positions 1–26 are cleaved as a signal peptide; the sequence is MKFFAYFAVIALSSASLINLFKRATA. Residues 119-209 form a disordered region; the sequence is DTEATTGSDT…SQQTSSHAGG (91 aa). Residues 131 to 148 show a composition bias toward low complexity; it reads KAATGATTSAGTGVTKTS. Over residues 149–160 the composition is skewed to polar residues; that stretch reads ETGGVSSTANSE. The segment covering 161-208 has biased composition (low complexity); sequence AKSGSVTTSKSGSTSISESKTTSGSSSSGKSSSSTSSASSQQTSSHAG. A lipid anchor (GPI-anchor amidated serine) is attached at Ser-197. The propeptide at 198–226 is removed in mature form; the sequence is ASSQQTSSHAGGASGAFVSLLGLFAALLI.

Predicted to be a cleavage substrate for KEX2.

Its subcellular location is the cell membrane. Functionally, putative adhesin which is involved in cell adhesion and virulence. Plays a role in Candida-bacterial interactions and subsequent regulation of filamentation. The protein is Probable GPI-anchored adhesin-like protein PGA28 (PGA28) of Candida albicans (strain SC5314 / ATCC MYA-2876) (Yeast).